The chain runs to 393 residues: NAD(P)H-quinone oxidoreductase subunit H, chloroplastic (393 aa).

Belongs to the complex I 49 kDa subunit family. NDH is composed of at least 16 different subunits, 5 of which are encoded in the nucleus.

It is found in the plastid. The protein localises to the chloroplast thylakoid membrane. It carries out the reaction a plastoquinone + NADH + (n+1) H(+)(in) = a plastoquinol + NAD(+) + n H(+)(out). The catalysed reaction is a plastoquinone + NADPH + (n+1) H(+)(in) = a plastoquinol + NADP(+) + n H(+)(out). Functionally, NDH shuttles electrons from NAD(P)H:plastoquinone, via FMN and iron-sulfur (Fe-S) centers, to quinones in the photosynthetic chain and possibly in a chloroplast respiratory chain. The immediate electron acceptor for the enzyme in this species is believed to be plastoquinone. Couples the redox reaction to proton translocation, and thus conserves the redox energy in a proton gradient. The protein is NAD(P)H-quinone oxidoreductase subunit H, chloroplastic of Calycanthus floridus var. glaucus (Eastern sweetshrub).